Consider the following 193-residue polypeptide: Ubiquitin-conjugating enzyme E2 E1 (193 aa).

The tract at residues 1–45 is disordered; it reads MSDDDSRASTSSSSSSSSNQQTEKEGSTPKKKESKVSMSKNSKLL. Position 2 is an N-acetylserine (S2). Over residues 8-18 the composition is skewed to low complexity; that stretch reads ASTSSSSSSSS. Basic and acidic residues predominate over residues 22-35; that stretch reads TEKEGSTPKKKESK. The span at 36 to 45 shows a compositional bias: polar residues; it reads VSMSKNSKLL. Residues 47–193 form the UBC core domain; it reads TSAKRIQKEL…ARQWTKRYAT (147 aa). Residue C131 is the Glycyl thioester intermediate of the active site. Residue K136 forms a Glycyl lysine isopeptide (Lys-Gly) (interchain with G-Cter in ISG15) linkage.

The protein belongs to the ubiquitin-conjugating enzyme family. As to quaternary structure, interacts with RNF14. In terms of processing, ISGylation suppresses ubiquitin E2 enzyme activity. Autoubiquitinated.

It localises to the nucleus. The catalysed reaction is S-ubiquitinyl-[E1 ubiquitin-activating enzyme]-L-cysteine + [E2 ubiquitin-conjugating enzyme]-L-cysteine = [E1 ubiquitin-activating enzyme]-L-cysteine + S-ubiquitinyl-[E2 ubiquitin-conjugating enzyme]-L-cysteine.. It carries out the reaction S-ubiquitinyl-[E1 ubiquitin-activating enzyme]-L-cysteine + [acceptor protein]-L-lysine = [E1 ubiquitin-activating enzyme]-L-cysteine + N(6)-monoubiquitinyl-[acceptor protein]-L-lysine.. It functions in the pathway protein modification; protein ubiquitination. Functionally, accepts ubiquitin from the E1 complex and catalyzes its covalent attachment to other proteins. Catalyzes the covalent attachment of ISG15 to other proteins. Mediates the selective degradation of short-lived and abnormal proteins. In vitro also catalyzes 'Lys-48'-linked polyubiquitination. This chain is Ubiquitin-conjugating enzyme E2 E1 (Ube2e1), found in Mus musculus (Mouse).